The following is a 375-amino-acid chain: UPF0612 protein C569.003 (375 aa).

Belongs to the UPF0612 family.

Its subcellular location is the cytoplasm. The sequence is that of UPF0612 protein C569.003 from Schizosaccharomyces pombe (strain 972 / ATCC 24843) (Fission yeast).